The chain runs to 226 residues: RNA annealing protein YRA1 (226 aa).

The disordered stretch occupies residues 1–62 (MSANLDKSLD…PIRKNTRAPP (62 aa)). N-acetylserine is present on Ser2. 2 positions are modified to phosphoserine: Ser8 and Ser100. Residues 78–158 (VKVNVEGLPR…SRLRLNLIVD (81 aa)) enclose the RRM domain. The disordered stretch occupies residues 173-226 (AMPQKGGNAPRPVKRGPNRKAAMAKSQNKPKREKPAKKSLEDLDKEMADYFEKK). Basic and acidic residues predominate over residues 208 to 226 (AKKSLEDLDKEMADYFEKK).

As to quaternary structure, component of the transcription/export (TREX) complex, which is at least is formed of SUB2, TEX1 and YRA1 and the THO complex composed of HPR1, MFT1, THO2 and THP1. Interacts with RDS3 and YRA2.

It localises to the nucleus. RNA-binding RNA annealing protein. May have a role in pre-mRNA metabolism. Component the TREX complex, which operates in coupling transcription elongation to mRNA export. This Saccharomyces cerevisiae (strain ATCC 204508 / S288c) (Baker's yeast) protein is RNA annealing protein YRA1 (YRA1).